Reading from the N-terminus, the 152-residue chain is Deoxyuridine 5'-triphosphate nucleotidohydrolase (152 aa).

Substrate-binding positions include 71-73, N84, 88-90, and M98; these read RSG and LID.

The protein belongs to the dUTPase family. Homotrimer. Mg(2+) serves as cofactor.

The catalysed reaction is dUTP + H2O = dUMP + diphosphate + H(+). The protein operates within pyrimidine metabolism; dUMP biosynthesis; dUMP from dCTP (dUTP route): step 2/2. Functionally, this enzyme is involved in nucleotide metabolism: it produces dUMP, the immediate precursor of thymidine nucleotides and it decreases the intracellular concentration of dUTP so that uracil cannot be incorporated into DNA. The polypeptide is Deoxyuridine 5'-triphosphate nucleotidohydrolase (Escherichia coli O1:K1 / APEC).